Reading from the N-terminus, the 436-residue chain is Xylose isomerase (436 aa).

Catalysis depends on residues histidine 100 and aspartate 103. Mg(2+)-binding residues include glutamate 231, glutamate 267, histidine 270, aspartate 295, aspartate 306, aspartate 308, and aspartate 338.

The protein belongs to the xylose isomerase family. In terms of assembly, homotetramer. The cofactor is Mg(2+).

It is found in the cytoplasm. The enzyme catalyses alpha-D-xylose = alpha-D-xylulofuranose. The polypeptide is Xylose isomerase (Agrobacterium fabrum (strain C58 / ATCC 33970) (Agrobacterium tumefaciens (strain C58))).